Reading from the N-terminus, the 211-residue chain is Probable calcium-binding protein CML11 (211 aa).

2 disordered regions span residues 1-22 and 40-60; these read MSEP…AAAT and SCSA…LGDD. The segment covering 44–53 has biased composition (low complexity); that stretch reads QQQQQQQQQQ. EF-hand domains lie at 60 to 95, 96 to 131, 136 to 171, and 172 to 207; these read DQLG…LGLK, PSTD…ELLY, YSED…LGHA, and LTVK…AAFD. Ca(2+) is bound by residues Asp73, Asn75, Asp77, Ser79, Glu84, Asp109, Asn111, Asn113, Glu120, Asp149, Asp151, Asn153, Glu160, Asp185, Asp187, Asp189, Arg191, and Glu196.

Potential calcium sensor. The protein is Probable calcium-binding protein CML11 (CML11) of Oryza sativa subsp. japonica (Rice).